The chain runs to 427 residues: MESLTLQPIARVDGAINLPGSKSVSNRALLLAALACGKTVLTNLLDSDDVRHMLNALSALGINYTLSADRTRCDITGNGGPLRAPGALELFLGNAGTAMRPLAAALCLGQNEIVLTGEPRMKERPIGHLVDSLRQGGANIDYLEQENYPPLRLRGGFIGGDIEVDGSVSSQFLTALLMTAPLAPKDTIIRVKGELVSKPYIDITLNLMKTFGVEIANHHYQQFVVKGGQQYHSPGRYLVEGDASSASYFLAAGAIKGGTVKVTGIGRKSMQGDIRFADVLEKMGATITWGDDFIACTRGELHAIDMDMNHIPDAAMTIATTALFAKGTTTLRNIYNWRVKETDRLFAMATELRKVGAEVEEGHDYIRITPPAKLQHADIGTYNDHRMAMCFSLVALSDTPVTILDPKCTAKTFPDYFEQLARMSTPA.

3-phosphoshikimate is bound by residues Lys-22, Ser-23, and Arg-27. A phosphoenolpyruvate-binding site is contributed by Lys-22. Phosphoenolpyruvate-binding residues include Gly-96 and Arg-124. Residues Ser-169, Ser-170, Gln-171, Ser-197, Asp-313, Asn-336, and Lys-340 each coordinate 3-phosphoshikimate. Residue Gln-171 participates in phosphoenolpyruvate binding. The active-site Proton acceptor is the Asp-313. Residues Arg-344, Arg-386, and Lys-411 each contribute to the phosphoenolpyruvate site.

This sequence belongs to the EPSP synthase family. Monomer.

Its subcellular location is the cytoplasm. The enzyme catalyses 3-phosphoshikimate + phosphoenolpyruvate = 5-O-(1-carboxyvinyl)-3-phosphoshikimate + phosphate. The protein operates within metabolic intermediate biosynthesis; chorismate biosynthesis; chorismate from D-erythrose 4-phosphate and phosphoenolpyruvate: step 6/7. In terms of biological role, catalyzes the transfer of the enolpyruvyl moiety of phosphoenolpyruvate (PEP) to the 5-hydroxyl of shikimate-3-phosphate (S3P) to produce enolpyruvyl shikimate-3-phosphate and inorganic phosphate. In Salmonella dublin (strain CT_02021853), this protein is 3-phosphoshikimate 1-carboxyvinyltransferase.